Here is a 317-residue protein sequence, read N- to C-terminus: Probable cell division protein WhiA (317 aa).

The H-T-H motif DNA-binding region spans 281-314 (SLKELGQMLDPPVGKSGINHRLRRIEKIAEELRK).

The protein belongs to the WhiA family.

Its function is as follows. Involved in cell division and chromosome segregation. The protein is Probable cell division protein WhiA of Clostridium novyi (strain NT).